The following is a 294-amino-acid chain: MKATLLLKAQLSPVSYTTKKSFQRQLNRTPYTAFQYFFQLEVQKLHNVSKYEDIINHVRGNSNFKRFARNEWDSMSLTKKRLYYASFCQSMDIDILNVSKIELAKRLEIPIPAMSEYLLFRNKFKVKFDSHCSSLERKDRKSVPRPSITRKVATTEICSKSRSNTPVGKINPRKRLVALKRISRSENTAKNHSHEAQNYLYDYMKRFQQMCKECRYAWNEEVDYDQKLEIRKKLQVWRAKFEEMMDNEIQILQKNMDIMSKFGLRSESYLTAANHDTNTQPNNILPMTYLLKKK.

The transit peptide at 1 to 90 directs the protein to the mitochondrion; sequence MKATLLLKAQ…RLYYASFCQS (90 aa). The HMG-box A stretch occupies residues 27 to 102; that stretch reads NRTPYTAFQY…IDILNVSKIE (76 aa). Residues 110–258 form an HMG-box B region; that stretch reads PIPAMSEYLL…IQILQKNMDI (149 aa).

Its subcellular location is the mitochondrion matrix. Functionally, mitochondrial HMG-box protein that limits the copy number of mitochondrial DNA (mtDNA), antagonizing HMG-box containing protein ABF2, a mtDNA packaging factor. In Saccharomyces cerevisiae (strain ATCC 204508 / S288c) (Baker's yeast), this protein is Mitochondrial HMG-box protein CIM1.